We begin with the raw amino-acid sequence, 152 residues long: Regulatory protein RecX (152 aa).

It belongs to the RecX family.

The protein localises to the cytoplasm. In terms of biological role, modulates RecA activity. The protein is Regulatory protein RecX of Chromohalobacter salexigens (strain ATCC BAA-138 / DSM 3043 / CIP 106854 / NCIMB 13768 / 1H11).